A 428-amino-acid polypeptide reads, in one-letter code: Kynureninase (428 aa).

Residues Thr-104, Thr-105, 132–135 (FPSD), Asp-213, His-216, and Tyr-238 each bind pyridoxal 5'-phosphate. Lys-239 is subject to N6-(pyridoxal phosphate)lysine. Trp-267 and Thr-295 together coordinate pyridoxal 5'-phosphate.

Belongs to the kynureninase family. Homodimer. The cofactor is pyridoxal 5'-phosphate.

The enzyme catalyses L-kynurenine + H2O = anthranilate + L-alanine + H(+). It catalyses the reaction 3-hydroxy-L-kynurenine + H2O = 3-hydroxyanthranilate + L-alanine + H(+). It functions in the pathway amino-acid degradation; L-kynurenine degradation; L-alanine and anthranilate from L-kynurenine: step 1/1. Its pathway is cofactor biosynthesis; NAD(+) biosynthesis; quinolinate from L-kynurenine: step 2/3. Catalyzes the cleavage of L-kynurenine (L-Kyn) and L-3-hydroxykynurenine (L-3OHKyn) into anthranilic acid (AA) and 3-hydroxyanthranilic acid (3-OHAA), respectively. This is Kynureninase from Bacillus cereus (strain ATCC 10987 / NRS 248).